Consider the following 179-residue polypeptide: Zinc finger HIT domain-containing protein 3 (179 aa).

The Zn(2+) site is built by C11, C14, C22, C25, C30, C34, H38, and C49. The HIT-type zinc-finger motif lies at C11 to C49. S104 is subject to Phosphoserine.

In terms of assembly, thyroid receptor interacting proteins (TRIPs) specifically interact with the ligand binding domain of the thyroid receptor (TR). Requires the presence of thyroid hormone for its interaction. Interacts with NUFIP1. Interacts (via HIT-type zinc finger) with the RUVBL1/RUVBL2 complex in the presence of ADP.

It localises to the cytoplasm. The protein resides in the nucleus. The protein is Zinc finger HIT domain-containing protein 3 (ZNHIT3) of Bos taurus (Bovine).